Here is a 236-residue protein sequence, read N- to C-terminus: Kinetochore protein Spc25 (236 aa).

Positions 44 to 106 (KNIISAKEAI…DMEAQLLRHT (63 aa)) form a coiled coil. Residues 194–217 (EVAGASPVTPSGSERPKATSKHSN) form a disordered region.

Belongs to the SPC25 family. Component of the Ndc80 complex, which is composed of Ndc80, Nuf2 and Spc25.

The protein resides in the nucleus. Its subcellular location is the chromosome. The protein localises to the centromere. It localises to the kinetochore. In terms of biological role, acts as a component of the essential kinetochore-associated Ndc80 complex, which is required for chromosome segregation and spindle checkpoint activity during meiosis and mitosis. Required for kinetochore integrity and the organization of stable microtubule binding sites in the outer plate of the kinetochore. Participates in SAC signaling that responds specifically to disruptions in spindle microtubule dynamics. The NDC80 complex synergistically enhances the affinity of the SKA1 complex for microtubules and may allow the NDC80 complex to track depolymerizing microtubules. The sequence is that of Kinetochore protein Spc25 from Drosophila persimilis (Fruit fly).